The primary structure comprises 393 residues: Dual specificity mitogen-activated protein kinase kinase 1 (393 aa).

The tract at residues 1–27 is disordered; the sequence is MPKKKPTPIQLNPAPDGSAVNGTSSAE. The Protein kinase domain maps to 68–361; sequence FEKISELGAG…LKQLMVHAFI (294 aa). ATP contacts are provided by residues 74 to 82 and lysine 97; that span reads LGAGNGGVV. The active-site Proton acceptor is aspartate 190. Phosphoserine; by RAF is present on residues serine 218 and serine 222. The tract at residues 270-307 is RAF1-binding; that stretch reads ELELMFGCQVEGDAAETPPRPRTPGRPLSSYGMDSRPP. Threonine 286 bears the Phosphothreonine mark. The residue at position 292 (threonine 292) is a Phosphothreonine; by MAPK1. Serine 298 carries the post-translational modification Phosphoserine; by PAK.

The protein belongs to the protein kinase superfamily. STE Ser/Thr protein kinase family. MAP kinase kinase subfamily. As to quaternary structure, found in a complex with at least BRAF, HRAS, MAP2K1, MAPK3/ERK1 and RGS14. Forms a heterodimer with MAP2K2/MEK2. Forms heterodimers with KSR2 which further dimerize to form tetramers. Interacts with KSR1 or KSR2 and BRAF; the interaction with KSR1 or KSR2 mediates KSR1-BRAF or KSR2-BRAF dimerization. Interacts with ARBB2, LAMTOR3, MAPK1/ERK2 and RAF1. Interacts with MAPK1/ERK2. Interacts with MORG1. Interacts with PPARG. Interacts with isoform 1 of VRK2. Interacts with SGK1. Interacts with BIRC6/bruce. Interacts with KAT7; the interaction promotes KAT7 phosphorylation. Interacts with RAF1 and NEK10; the interaction is required for ERK1/2-signaling pathway activation in response to UV irradiation. Interacts with TRAF3IP3. Interacts with MOS. In terms of processing, phosphorylation at Ser-218 and Ser-222 by MAP kinase kinase kinases (BRAF or MEKK1) positively regulates the kinase activity. Also phosphorylated at Thr-292 by MAPK1/ERK2 and at Ser-298 by PAK. MAPK1/ERK2 phosphorylation of Thr-292 occurs in response to cellular adhesion and leads to inhibition of Ser-298 phosphorylation by PAK. Autophosphorylated at Ser-218 and Ser-222, autophosphosphorylation is promoted by NEK10 following UV irradiation.

The protein localises to the cytoplasm. It localises to the cytoskeleton. It is found in the microtubule organizing center. The protein resides in the centrosome. Its subcellular location is the spindle pole body. The protein localises to the nucleus. It localises to the membrane. The enzyme catalyses L-seryl-[protein] + ATP = O-phospho-L-seryl-[protein] + ADP + H(+). It carries out the reaction L-threonyl-[protein] + ATP = O-phospho-L-threonyl-[protein] + ADP + H(+). The catalysed reaction is L-tyrosyl-[protein] + ATP = O-phospho-L-tyrosyl-[protein] + ADP + H(+). With respect to regulation, ras proteins such as HRAS mediate the activation of RAF proteins such as RAF1 or BRAF which in turn activate extracellular signal-regulated kinases (ERK) through MAPK (mitogen-activated protein kinases) and ERK kinases MAP2K1/MEK1 and MAP2K2/MEK2. Activation occurs through phosphorylation of Ser-218 and Ser-222. MAP2K1/MEK1 binds KSR1 or KSR2 releasing the inhibitory intramolecular interaction between KSR1 or KSR2 protein kinase and N-terminal domains. This allows KSR1 or KSR2 dimerization with BRAF leading to BRAF activation and phosphorylation of MAP2K1. MAP2K1/MEK1 is also the target of negative feed-back regulation by its substrate kinases, such as MAPK1/ERK2. These phosphorylate MAP2K1/MEK1 on Thr-292, thereby facilitating dephosphorylation of the activating residues Ser-218 and Ser-222. Inhibited by serine/threonine phosphatase 2A. Functionally, dual specificity protein kinase which acts as an essential component of the MAP kinase signal transduction pathway. Binding of extracellular ligands such as growth factors, cytokines and hormones to their cell-surface receptors activates RAS and this initiates RAF1 activation. RAF1 then further activates the dual-specificity protein kinases MAP2K1/MEK1 and MAP2K2/MEK2. Both MAP2K1/MEK1 and MAP2K2/MEK2 function specifically in the MAPK/ERK cascade, and catalyze the concomitant phosphorylation of a threonine and a tyrosine residue in a Thr-Glu-Tyr sequence located in the extracellular signal-regulated kinases MAPK3/ERK1 and MAPK1/ERK2, leading to their activation and further transduction of the signal within the MAPK/ERK cascade. Activates BRAF in a KSR1 or KSR2-dependent manner; by binding to KSR1 or KSR2 releases the inhibitory intramolecular interaction between KSR1 or KSR2 protein kinase and N-terminal domains which promotes KSR1 or KSR2-BRAF dimerization and BRAF activation. Depending on the cellular context, this pathway mediates diverse biological functions such as cell growth, adhesion, survival and differentiation, predominantly through the regulation of transcription, metabolism and cytoskeletal rearrangements. One target of the MAPK/ERK cascade is peroxisome proliferator-activated receptor gamma (PPARG), a nuclear receptor that promotes differentiation and apoptosis. MAP2K1/MEK1 has been shown to export PPARG from the nucleus. The MAPK/ERK cascade is also involved in the regulation of endosomal dynamics, including lysosome processing and endosome cycling through the perinuclear recycling compartment (PNRC), as well as in the fragmentation of the Golgi apparatus during mitosis. In Pan troglodytes (Chimpanzee), this protein is Dual specificity mitogen-activated protein kinase kinase 1 (MAP2K1).